The following is a 123-amino-acid chain: MGLGSSKRKEEPPHKSEPKTVGRVKRAGARPDEMIAKYAEVLKTRGILPEYFLVHEAKSSQYIDEDGDVANEFYQETMSDGEKRRLCRLMKNLRPKGKERYAIPRLKHDIPVVIWEVQQPQET.

Positions 1–28 (MGLGSSKRKEEPPHKSEPKTVGRVKRAG) are disordered. A compositionally biased stretch (basic and acidic residues) spans 7–20 (KRKEEPPHKSEPKT).

The protein belongs to the TUSC2 family.

This is an uncharacterized protein from Caenorhabditis elegans.